The chain runs to 481 residues: UDP-N-acetylmuramate--L-alanine ligase (481 aa).

115–121 contributes to the ATP binding site; it reads GTHGKTT.

Belongs to the MurCDEF family.

It localises to the cytoplasm. It catalyses the reaction UDP-N-acetyl-alpha-D-muramate + L-alanine + ATP = UDP-N-acetyl-alpha-D-muramoyl-L-alanine + ADP + phosphate + H(+). It functions in the pathway cell wall biogenesis; peptidoglycan biosynthesis. Its function is as follows. Cell wall formation. The protein is UDP-N-acetylmuramate--L-alanine ligase of Rhodospirillum rubrum (strain ATCC 11170 / ATH 1.1.1 / DSM 467 / LMG 4362 / NCIMB 8255 / S1).